Reading from the N-terminus, the 478-residue chain is Bifunctional protein HldE (478 aa).

A ribokinase region spans residues 1–318; it reads MKVTLPDFRQ…ENAIRGRADT (318 aa). Residue 195–198 coordinates ATP; it reads NLSE. The active site involves Asp-264. A cytidylyltransferase region spans residues 344–478; it reads MTNGCFDILH…NMIKASTSQS (135 aa).

The protein in the N-terminal section; belongs to the carbohydrate kinase PfkB family. This sequence in the C-terminal section; belongs to the cytidylyltransferase family. As to quaternary structure, homodimer.

It catalyses the reaction D-glycero-beta-D-manno-heptose 7-phosphate + ATP = D-glycero-beta-D-manno-heptose 1,7-bisphosphate + ADP + H(+). The enzyme catalyses D-glycero-beta-D-manno-heptose 1-phosphate + ATP + H(+) = ADP-D-glycero-beta-D-manno-heptose + diphosphate. Its pathway is nucleotide-sugar biosynthesis; ADP-L-glycero-beta-D-manno-heptose biosynthesis; ADP-L-glycero-beta-D-manno-heptose from D-glycero-beta-D-manno-heptose 7-phosphate: step 1/4. It functions in the pathway nucleotide-sugar biosynthesis; ADP-L-glycero-beta-D-manno-heptose biosynthesis; ADP-L-glycero-beta-D-manno-heptose from D-glycero-beta-D-manno-heptose 7-phosphate: step 3/4. Catalyzes the phosphorylation of D-glycero-D-manno-heptose 7-phosphate at the C-1 position to selectively form D-glycero-beta-D-manno-heptose-1,7-bisphosphate. Its function is as follows. Catalyzes the ADP transfer from ATP to D-glycero-beta-D-manno-heptose 1-phosphate, yielding ADP-D-glycero-beta-D-manno-heptose. The polypeptide is Bifunctional protein HldE (Pectobacterium atrosepticum (strain SCRI 1043 / ATCC BAA-672) (Erwinia carotovora subsp. atroseptica)).